The sequence spans 480 residues: Voltage-gated potassium channel regulatory subunit KCNG2 (480 aa).

Disordered stretches follow at residues methionine 1 to glycine 25 and alanine 144 to glycine 167. At methionine 1–leucine 187 the chain is on the cytoplasmic side. A helical membrane pass occupies residues alanine 188 to leucine 209. Topologically, residues serine 210–asparagine 230 are extracellular. Residues leucine 231–glutamine 252 traverse the membrane as a helical segment. The Cytoplasmic segment spans residues alanine 253 to proline 263. A helical transmembrane segment spans residues leucine 264 to alanine 284. Residues alanine 285 to alanine 296 are Extracellular-facing. Residues glycine 297–histidine 317 form a helical; Voltage-sensor membrane-spanning segment. Topologically, residues serine 318–alanine 332 are cytoplasmic. The chain crosses the membrane as a helical span at residues arginine 333–histidine 354. The Extracellular portion of the chain corresponds to leucine 355–valine 369. Positions proline 370–threonine 381 form an intramembrane region, helical. The short motif at threonine 382 to aspartate 387 is the Selectivity filter element. Residues threonine 382 to valine 389 lie within the membrane without spanning it. At proline 390 to glutamine 396 the chain is on the extracellular side. The chain crosses the membrane as a helical span at residues valine 397–tyrosine 425. The Cytoplasmic portion of the chain corresponds to serine 426 to proline 480. The segment at lysine 429 to proline 480 is disordered. Over residues valine 441–threonine 452 the composition is skewed to basic and acidic residues.

This sequence belongs to the potassium channel family. G (TC 1.A.1.2) subfamily. Kv6.2/KCNG2 sub-subfamily. Heterodimer with KCNB1. Highly expressed in heart, in particular in right and left atrium, and detected at lower levels in the right and left ventricle.

The protein localises to the cell membrane. Regulatory alpha-subunit of the voltage-gated potassium (Kv) channel which, when coassembled with KCNB1, can modulate the kinetics and conductance-voltage relationship. Modulates channel activity by shifting the threshold and the half-maximal activation to more negative values. Potassium channel subunit that does not form functional channels by itself. This Rattus norvegicus (Rat) protein is Voltage-gated potassium channel regulatory subunit KCNG2.